The sequence spans 108 residues: Integration host factor subunit alpha (108 aa).

This sequence belongs to the bacterial histone-like protein family. Heterodimer of an alpha and a beta chain.

Functionally, this protein is one of the two subunits of integration host factor, a specific DNA-binding protein that functions in genetic recombination as well as in transcriptional and translational control. In Methylorubrum extorquens (strain CM4 / NCIMB 13688) (Methylobacterium extorquens), this protein is Integration host factor subunit alpha.